Reading from the N-terminus, the 130-residue chain is Immunoglobulin kappa chain variable 9-120 (130 aa).

Residues 1–22 form the signal peptide; the sequence is MDMRAPAQIFGFLLLLFQGTRC. The framework-1 stretch occupies residues 23–45; sequence DIQMTQSPSSLSASLGERVSLTC. Residues Cys-45 and Cys-110 are joined by a disulfide bond. Residues 46–56 form a complementarity-determining-1 region; sequence RASQDIGSSLN. The tract at residues 57–71 is framework-2; sequence WLQQEPDGTIKRLIY. A complementarity-determining-2 region spans residues 72–78; the sequence is ATSSLDS. A framework-3 region spans residues 79 to 110; that stretch reads GVPKRFSGSRSGSDYSLTISSLESEDFVDYYC. The interval 111–119 is complementarity-determining-3; it reads LQYASSPWT. Residues 120–129 form a framework-4 region; the sequence is FGGGTKLEIK.

The protein is Immunoglobulin kappa chain variable 9-120 of Mus musculus (Mouse).